We begin with the raw amino-acid sequence, 110 residues long: UPF0122 protein SPG_1182 (110 aa).

It belongs to the UPF0122 family.

Might take part in the signal recognition particle (SRP) pathway. This is inferred from the conservation of its genetic proximity to ftsY/ffh. May be a regulatory protein. In Streptococcus pneumoniae serotype 19F (strain G54), this protein is UPF0122 protein SPG_1182.